The sequence spans 689 residues: Glycine--tRNA ligase beta subunit (689 aa).

This sequence belongs to the class-II aminoacyl-tRNA synthetase family. Tetramer of two alpha and two beta subunits.

It is found in the cytoplasm. It carries out the reaction tRNA(Gly) + glycine + ATP = glycyl-tRNA(Gly) + AMP + diphosphate. The polypeptide is Glycine--tRNA ligase beta subunit (Serratia proteamaculans (strain 568)).